The following is a 79-amino-acid chain: Dolichol phosphate-mannose biosynthesis regulatory protein (79 aa).

Helical transmembrane passes span 8 to 28 and 50 to 70; these read IGFV…TWVI and IIIP…FLGL.

Belongs to the DPM2 family. In terms of assembly, component of the dolichol-phosphate mannose (DPM) synthase complex composed of dpm1, dpm2 and dpm3.

The protein localises to the endoplasmic reticulum membrane. It functions in the pathway protein modification; protein glycosylation. Its function is as follows. Regulates the biosynthesis of dolichol phosphate-mannose. Regulatory subunit of the dolichol-phosphate mannose (DPM) synthase complex; essential for the ER localization and stable expression of dpm1. The protein is Dolichol phosphate-mannose biosynthesis regulatory protein (dpm2-1) of Dictyostelium discoideum (Social amoeba).